Consider the following 215-residue polypeptide: Ceramide-1-phosphate transfer protein (215 aa).

An N-acylsphingoid base 1-phosphate is bound by residues Asp-57, Lys-61, Arg-107, Arg-111, and His-151.

This sequence belongs to the GLTP family.

The protein localises to the cytoplasm. Its subcellular location is the cytosol. The protein resides in the golgi apparatus. It localises to the trans-Golgi network membrane. It is found in the cell membrane. The protein localises to the endosome membrane. Its subcellular location is the nucleus outer membrane. It catalyses the reaction N-(hexadecanoyl)-sphing-4-enine-1-phosphate(in) = N-(hexadecanoyl)-sphing-4-enine-1-phosphate(out). It carries out the reaction N-(9Z-octadecenoyl)-sphing-4-enine-1-phosphate(in) = N-(9Z-octadecenoyl)-sphing-4-enine-1-phosphate(out). In terms of biological role, mediates the intracellular transfer of ceramide-1-phosphate (C1P) between organelle membranes and the cell membrane. Required for normal structure of the Golgi stacks. Can bind phosphoceramides with a variety of aliphatic chains, but has a preference for lipids with saturated C16:0 or monounsaturated C18:1 aliphatic chains, and is inefficient with phosphoceramides containing lignoceryl (C24:0). Plays a role in the regulation of the cellular levels of ceramide-1-phosphate, and thereby contributes to the regulation of phospholipase PLA2G4A activity and the release of arachidonic acid. Has no activity with galactosylceramide, lactosylceramide, sphingomyelin, phosphatidylcholine, phosphatidic acid and ceramide. C1P transfer is stimulated by phosphatidylserine in C1P source vesicles. Regulates autophagy and pyroptosis, but not apoptosis. In Xenopus tropicalis (Western clawed frog), this protein is Ceramide-1-phosphate transfer protein (cptp).